The chain runs to 457 residues: Ribulose bisphosphate carboxylase large chain (457 aa).

The propeptide occupies Met1–Ser2. At Pro3 the chain carries N-acetylproline. An N6,N6,N6-trimethyllysine modification is found at Lys14. Substrate is bound by residues Asn123 and Thr173. The active-site Proton acceptor is the Lys175. Residue Lys177 coordinates substrate. Mg(2+) is bound by residues Lys201, Asp203, and Glu204. Position 201 is an N6-carboxylysine (Lys201). The Proton acceptor role is filled by His294. Arg295, His327, and Ser379 together coordinate substrate.

Belongs to the RuBisCO large chain family. Type I subfamily. Heterohexadecamer of 8 large chains and 8 small chains; disulfide-linked. The disulfide link is formed within the large subunit homodimers. It depends on Mg(2+) as a cofactor. The disulfide bond which can form in the large chain dimeric partners within the hexadecamer appears to be associated with oxidative stress and protein turnover.

It is found in the plastid. The protein resides in the chloroplast. It catalyses the reaction 2 (2R)-3-phosphoglycerate + 2 H(+) = D-ribulose 1,5-bisphosphate + CO2 + H2O. The catalysed reaction is D-ribulose 1,5-bisphosphate + O2 = 2-phosphoglycolate + (2R)-3-phosphoglycerate + 2 H(+). RuBisCO catalyzes two reactions: the carboxylation of D-ribulose 1,5-bisphosphate, the primary event in carbon dioxide fixation, as well as the oxidative fragmentation of the pentose substrate in the photorespiration process. Both reactions occur simultaneously and in competition at the same active site. This is Ribulose bisphosphate carboxylase large chain from Phelline comosa.